The following is an 83-amino-acid chain: NAD(P)H-quinone oxidoreductase subunit L (83 aa).

2 helical membrane-spanning segments follow: residues 15–35 and 53–73; these read LFVL…VPLA and LGVY…APFI.

The protein belongs to the complex I NdhL subunit family. In terms of assembly, NDH-1 can be composed of about 15 different subunits; different subcomplexes with different compositions have been identified which probably have different functions.

The protein localises to the cellular thylakoid membrane. It carries out the reaction a plastoquinone + NADH + (n+1) H(+)(in) = a plastoquinol + NAD(+) + n H(+)(out). It catalyses the reaction a plastoquinone + NADPH + (n+1) H(+)(in) = a plastoquinol + NADP(+) + n H(+)(out). Its function is as follows. NDH-1 shuttles electrons from an unknown electron donor, via FMN and iron-sulfur (Fe-S) centers, to quinones in the respiratory and/or the photosynthetic chain. The immediate electron acceptor for the enzyme in this species is believed to be plastoquinone. Couples the redox reaction to proton translocation, and thus conserves the redox energy in a proton gradient. Cyanobacterial NDH-1 also plays a role in inorganic carbon-concentration. The protein is NAD(P)H-quinone oxidoreductase subunit L of Synechococcus sp. (strain CC9902).